A 400-amino-acid chain; its full sequence is Acetate kinase (400 aa).

Position 10 (Asn-10) interacts with Mg(2+). Lys-17 serves as a coordination point for ATP. Arg-91 contacts substrate. Asp-150 (proton donor/acceptor) is an active-site residue. ATP is bound by residues 210–214 (HLGSG), 285–287 (DCR), and 333–337 (GIGEN). Position 387 (Glu-387) interacts with Mg(2+).

The protein belongs to the acetokinase family. In terms of assembly, homodimer. It depends on Mg(2+) as a cofactor. Mn(2+) serves as cofactor.

It localises to the cytoplasm. The catalysed reaction is acetate + ATP = acetyl phosphate + ADP. Its pathway is metabolic intermediate biosynthesis; acetyl-CoA biosynthesis; acetyl-CoA from acetate: step 1/2. Catalyzes the formation of acetyl phosphate from acetate and ATP. Can also catalyze the reverse reaction. In Baumannia cicadellinicola subsp. Homalodisca coagulata, this protein is Acetate kinase.